The sequence spans 621 residues: F-box/LRR-repeat protein 4 (621 aa).

Residue Arg-28 is modified to Asymmetric dimethylarginine. An F-box domain is found at Asn-277 to Leu-332. LRR repeat units follow at residues Glu-376 to Ser-397, Asn-402 to His-421, Gly-427 to Asn-448, Asp-452 to Ile-474, Lys-480 to Ala-501, Cys-504 to Cys-524, Leu-532 to Cys-558, Thr-559 to Ser-583, and Cys-584 to Ser-609.

In terms of assembly, part of a SCF (SKP1-CUL1-F-box) protein ligase complex. Interacts with FAF2 and VCP. Interacts with PPTC7; this interaction promotes destruction of BNIP3 and NIX and mitophagy suppression.

It is found in the cytoplasm. The protein resides in the nucleus. Its subcellular location is the mitochondrion outer membrane. Substrate-recognition component of the mitochondria-localized SCF-FBXL4 ubiquitin E3 ligase complex that plays a role in the restriction of mitophagy by controlling the degradation of BNIP3 and NIX mitophagy receptors. Also rescues mitochondrial injury through reverting hyperactivation of DRP1-mediated mitochondrial fission. The polypeptide is F-box/LRR-repeat protein 4 (FBXL4) (Bos taurus (Bovine)).